The following is a 234-amino-acid chain: Sugar fermentation stimulation protein homolog (234 aa).

Belongs to the SfsA family.

This chain is Sugar fermentation stimulation protein homolog, found in Shewanella sp. (strain MR-4).